The primary structure comprises 308 residues: MGERQAVKVAILGTGNIGTDLMYKLLRNPGHMELAMFAGIDPQSEGIARAKKLGIPTSYEGIKAVLDDPEIRIVFDATSAKAHVRHAKMLREAGKIAIDLTPAARGPYVVPPVNLGAHLDKDNVNLITCGGQATIPLVFAVSRVVPVRYAEIVSTVASKSAGPGTRQNIDEFTFTTAHGLEAIGGAEQGKAIIILNPAEPPIIMRNTVYVIPANEEFDQAAIVASVDQMVAEVQQYVPGYRLKDAPVFDRRRTPWGERTIIAMLLEVEGAGDFLPPYSGNLDIMTAAAWRVGELFAQHLLGIRQEVAA.

T14–I17 provides a ligand contact to NAD(+). The active-site Acyl-thioester intermediate is C129. NAD(+)-binding positions include S160–N168 and N280.

It belongs to the acetaldehyde dehydrogenase family.

The catalysed reaction is acetaldehyde + NAD(+) + CoA = acetyl-CoA + NADH + H(+). The chain is Acetaldehyde dehydrogenase from Thermomicrobium roseum (strain ATCC 27502 / DSM 5159 / P-2).